The sequence spans 145 residues: D-aminoacyl-tRNA deacylase (145 aa).

The short motif at 137–138 (GP) is the Gly-cisPro motif, important for rejection of L-amino acids element.

This sequence belongs to the DTD family. In terms of assembly, homodimer.

It is found in the cytoplasm. The enzyme catalyses glycyl-tRNA(Ala) + H2O = tRNA(Ala) + glycine + H(+). The catalysed reaction is a D-aminoacyl-tRNA + H2O = a tRNA + a D-alpha-amino acid + H(+). Its function is as follows. An aminoacyl-tRNA editing enzyme that deacylates mischarged D-aminoacyl-tRNAs. Also deacylates mischarged glycyl-tRNA(Ala), protecting cells against glycine mischarging by AlaRS. Acts via tRNA-based rather than protein-based catalysis; rejects L-amino acids rather than detecting D-amino acids in the active site. By recycling D-aminoacyl-tRNA to D-amino acids and free tRNA molecules, this enzyme counteracts the toxicity associated with the formation of D-aminoacyl-tRNA entities in vivo and helps enforce protein L-homochirality. In Pseudomonas aeruginosa (strain LESB58), this protein is D-aminoacyl-tRNA deacylase.